The sequence spans 394 residues: MAESNFVDYVKIYCRSGKGGRGSAHMRREKYVPNGGPDGGDGGRGGHVILRGNRNYWTLLHLKYDRHVFATHGGNGSKNKSFGKDGEDKVIEVPCGTVVYNAETGEYICDITEHGQEIILLKGGRGGLGNWHFRTATRQAPRFAQPGEPMQELMVILELKLLADVGLVGFPNAGKSTLLSTVSAARPKIANYPFTTLEPNLGIVSYREGKSFVMADIPGIIEGASEGKGLGLRFLRHIERNSLLLFMVPGDTDDIRKEYEILLNELATFNPEMLDKQRVLAITKSDMLDEELIAMLEPTLPDNVPHIFISSVTGLGIQQLKDILWTELNKDSNKLEGVRTETIVHRAKDVAKLQEELKDMGEDEDFEYEYEEDADDDFDYEYEDENWDEEEEKK.

Positions 4 to 162 (SNFVDYVKIY…LMVILELKLL (159 aa)) constitute an Obg domain. The OBG-type G domain maps to 163–329 (ADVGLVGFPN…LKDILWTELN (167 aa)). GTP is bound by residues 169 to 176 (GFPNAGKS), 194 to 198 (FTTLE), 216 to 219 (DIPG), 283 to 286 (TKSD), and 310 to 312 (SSV). Mg(2+) contacts are provided by Ser176 and Thr196. Residues 358-394 (KDMGEDEDFEYEYEEDADDDFDYEYEDENWDEEEEKK) form a disordered region. Residues 361-394 (GEDEDFEYEYEEDADDDFDYEYEDENWDEEEEKK) are compositionally biased toward acidic residues.

This sequence belongs to the TRAFAC class OBG-HflX-like GTPase superfamily. OBG GTPase family. Monomer. The cofactor is Mg(2+).

The protein resides in the cytoplasm. Its function is as follows. An essential GTPase which binds GTP, GDP and possibly (p)ppGpp with moderate affinity, with high nucleotide exchange rates and a fairly low GTP hydrolysis rate. Plays a role in control of the cell cycle, stress response, ribosome biogenesis and in those bacteria that undergo differentiation, in morphogenesis control. This chain is GTPase Obg, found in Phocaeicola vulgatus (strain ATCC 8482 / DSM 1447 / JCM 5826 / CCUG 4940 / NBRC 14291 / NCTC 11154) (Bacteroides vulgatus).